The sequence spans 48 residues: Hemoglobin subunit beta-B (48 aa).

The Globin domain maps to 2 to 48 (EWTDAERGAILSLWGKIDPDELGPALLARXXLVYXXTQRYFASFGDL).

It belongs to the globin family. In terms of assembly, heterotetramer of two alpha chains and two beta chains. In terms of tissue distribution, red blood cells.

Its function is as follows. Involved in oxygen transport from gills to the various peripheral tissues. The sequence is that of Hemoglobin subunit beta-B from Catostomus clarkii (Desert sucker).